The sequence spans 620 residues: Chaperone protein HscA homolog (620 aa).

It belongs to the heat shock protein 70 family.

Its function is as follows. Chaperone involved in the maturation of iron-sulfur cluster-containing proteins. Has a low intrinsic ATPase activity which is markedly stimulated by HscB. This Shewanella sp. (strain MR-4) protein is Chaperone protein HscA homolog.